The chain runs to 115 residues: Xenovulene A biosynthesis cluster protein asL2 (115 aa).

In terms of biological role, part of the gene cluster that mediates the biosynthesis of xenovulene A, an unusual meroterpenoid that has potent inhibitory effects on the human gamma-aminobutyrate A (GABAA) benzodiazepine receptor. The first step of xenovulene A biosynthesis is the biosynthesis of 3-methylorcinaldehyde performed by the non-reducing polyketide synthase aspks1. The salicylate hydroxylase asL1 then catalyzes the oxidative dearomatization of 3-methylorcinaldehyde to yield a dearomatized hydroxycyclohexadione. The 2-oxoglutarate-dependent dioxygenase asL3 further catalyzes the oxidative ring expansion to provide the first tropolone metabolite. The cytochrome P450 monooxygenase asR2 allows the synthesis of tropolone hemiacetal. In parallel, a previously unrecognised class of terpene cyclase, asR6, produces alpha-humulene from farnesylpyrophosphate (FPP). The putative Diels-Alderase asR5 probably catalyzes the formation of the tropolone-humulene skeleton by linking humulene and the polyketide moiety. Oxidative-ring contractions catalyzed by asL4 and asL6 then processively remove carbon atoms from the polyketide to yield xenovulene A. This Sarocladium schorii (Acremonium strictum (strain IMI 501407)) protein is Xenovulene A biosynthesis cluster protein asL2.